A 756-amino-acid chain; its full sequence is Polyribonucleotide nucleotidyltransferase (756 aa).

2 residues coordinate Mg(2+): Asp-492 and Asp-498. The KH domain occupies 559-618 (PQHAEVFVNPDVIRIIIGPGGKNIKAITAATGASIDIEDSGKVSIFAPTYEAMEMAREMV). The 75-residue stretch at 628–702 (GKNYVGKVRK…SRKAVLLEEQ (75 aa)) folds into the S1 motif domain. Positions 703-756 (GVEWNPEDTARPSGPPRDRGDRGDRGGRGDRGGDRRGGDRGGRGGDRGRGGDRR) are disordered. A compositionally biased stretch (basic and acidic residues) spans 718–756 (PRDRGDRGDRGGRGDRGGDRRGGDRGGRGGDRGRGGDRR).

Belongs to the polyribonucleotide nucleotidyltransferase family. Requires Mg(2+) as cofactor.

It is found in the cytoplasm. It catalyses the reaction RNA(n+1) + phosphate = RNA(n) + a ribonucleoside 5'-diphosphate. Its function is as follows. Involved in mRNA degradation. Catalyzes the phosphorolysis of single-stranded polyribonucleotides processively in the 3'- to 5'-direction. This Nitratidesulfovibrio vulgaris (strain DSM 19637 / Miyazaki F) (Desulfovibrio vulgaris) protein is Polyribonucleotide nucleotidyltransferase.